A 414-amino-acid chain; its full sequence is Serine/arginine-rich splicing factor SR45 (414 aa).

2 disordered regions span residues 1–95 and 175–414; these read MAKP…KAVQ and LPPR…PRKT. Low complexity-rich tracts occupy residues 10–34 and 42–60; these read SPSV…SRSI and RSLS…GSRS. The Nuclear localization signal 1 signature appears at 62–69; sequence PRRGKSPA. The residue at position 77 (Ser-77) is a Phosphoserine. The RRM domain occupies 98–176; sequence LVLHVDSLSR…KVVKATFTLP (79 aa). Over residues 176–191 the composition is skewed to low complexity; the sequence is PPRQKVSSPPKPVSAA. The span at 205–220 shows a compositional bias: basic and acidic residues; it reads DAEKDGGPRRPRETSP. A required for isoform 1 function in petal development region spans residues 218 to 219; the sequence is TS. The segment covering 228–243 has biased composition (basic residues); sequence PRRRSPLPRRGLSPRR. Positions 229 to 236 match the Nuclear localization signal 2 motif; the sequence is RRRSPLPR. Ser-256 is modified (phosphoserine). 3 short sequence motifs (nuclear localization signal) span residues 284-291, 318-325, and 338-345; these read PRRYRSPP, PRRLRSPP, and IRRPGRSR. Composition is skewed to basic residues over residues 285–343 and 352–363; these read RRYR…RPGR and RKGRGPAGRRGR. The segment covering 364-373 has biased composition (low complexity); it reads SSSYSSSPSP. The short motif at 373-380 is the Nuclear localization signal 6 element; that stretch reads PRRIPRKI. A compositionally biased stretch (basic residues) spans 375–394; the sequence is RIPRKISRSRSPKRPLRGKR. Residues 404 to 414 show a composition bias toward pro residues; that stretch reads SPPPPPPPRKT.

This sequence belongs to the splicing factor SR family. SR45 subfamily. Component of the spliceosome. Interacts with AFC2, U2AF35A, U2AF35B, RNU1, SCL33 and SKIP. The interaction with AFC2 depends on phosphorylation status. Interaction with RNU1 defines initial 5' splice sites and interaction with U2AF35B 3' splice sites in the early stage of spliceosome assembly. Phosphorylated by AFC2. The phosphorylation status regulates intranuclear distribution. As to expression, especially present in actively growing regions and dividing cells. Mostly expressed in roots (primary and secondary root meristem), shoot apical meristem (SAM), leaf primordia, pollen and inflorescence, and, to a lower extent, in leaves, vascular tissue, hydathode and fruits.

It localises to the nucleus speckle. It is found in the nucleus. The protein resides in the nucleoplasm. Involved in 5' and 3' splicing site selection of introns, and may bridge the 5' and 3' components of the spliceosome. Isoform 1 is required during flower petal development and isoform 2 is involved in root growth. Negatively regulates glucose and abscisic acid (ABA) signaling during early seedling development. Involved in the RNA-directed DNA methylation pathway. Modulates KIN10 stability in response to sugars, probably through the splicing regulation of 5PTASE13, a protein implicated in the proteasomal degradation of KIN10. The sequence is that of Serine/arginine-rich splicing factor SR45 from Arabidopsis thaliana (Mouse-ear cress).